A 377-amino-acid polypeptide reads, in one-letter code: Membrane protein MLC1 (377 aa).

Residues 1 to 23 (MTQEPFREELAYDRMPTLERGRQ) show a composition bias toward basic and acidic residues. The segment at 1–36 (MTQEPFREELAYDRMPTLERGRQDPASYAPDAKPSD) is disordered. Transmembrane regions (helical) follow at residues 52–72 (WVFS…SLYL), 82–100 (YLRC…SFTV), 111–131 (FQIL…WFGC), and 144–164 (FNLI…IIAA). Serine 177 and serine 179 each carry phosphoserine. 4 helical membrane-spanning segments follow: residues 199–219 (SVVE…ALNV), 230–250 (VTFF…HVAA), 257–277 (LVEV…TASG), and 304–324 (LLLL…GTAI).

In terms of assembly, interacts with ATP1B1. Part of a complex containing ATP1B1, TRPV4, AQP4 and HEPACAM. Expressed in the brain, with highest levels found in the amygdala, nucleus caudatus, thalamus and hippocampus.

The protein resides in the membrane. The protein localises to the cell membrane. It localises to the cytoplasm. Its subcellular location is the perinuclear region. It is found in the endoplasmic reticulum. Functionally, transmembrane protein mainly expressed in brain astrocytes that may play a role in transport across the blood-brain and brain-cerebrospinal fluid barriers. Regulates the response of astrocytes to hypo-osmosis by promoting calcium influx. May function as regulatory protein of membrane protein complexes such as ion channels. The sequence is that of Membrane protein MLC1 from Homo sapiens (Human).